A 364-amino-acid chain; its full sequence is Pre-mRNA-splicing factor SLT11 (364 aa).

Residues 331-364 (KSTDNAKNDKKKTSKKVHKDRSKKSKPRANKLTI) are disordered. Over residues 339-364 (DKKKTSKKVHKDRSKKSKPRANKLTI) the composition is skewed to basic residues.

It belongs to the SLT11 family. As to quaternary structure, belongs to the CWC complex (or CEF1-associated complex), a spliceosome subcomplex composed of the U2, U5 and U6 snRNAs and at least BUD13, BUD31, BRR2, CDC40, CEF1, CLF1, CUS1, CWC2, CWC15, CWC21, CWC22, CWC23, CWC24, CWC25, CWC27, ECM2, HSH155, IST3, ISY1, LEA1, MSL1, NTC20, PRP8, PRP9, PRP11, PRP19, PRP21, PRP22, PRP45, PRP46, SLU7, SMB1, SMD1, SMD2, SMD3, SMX2, SMX3, SNT309, SNU114, SPP2, SYF1, SYF2, RSE1 and YJU2. Interacts with SLU7.

It localises to the nucleus. Involved in pre-mRNA splicing. Facilitates the cooperative formation of U2/U6 helix II in association with stem II in the spliceosome. Binds to RNA. The chain is Pre-mRNA-splicing factor SLT11 (ECM2) from Saccharomyces cerevisiae (strain ATCC 204508 / S288c) (Baker's yeast).